We begin with the raw amino-acid sequence, 772 residues long: MKKIIFLVLFLIFIFKDIKSSYGVDLVNFKMITLLSNNFNDLGFNNMLNQGKVNVEKQLGITDTKVYIVDGYNDTKALLLPMVQNEDVDFVMCTSLGHVEACKEIAKMYEGSLTIKTQFMVRGSSNATSNLLQVTYNYASINYISGVFAGLYTKTNKIGFLSPGLLGGSADCFVYAYWLGAKQINPKIEFYYYNIGAFLNSDKTTRATAELLDMGCDVIGDTLDDFSAGNTVISRGFKALGTNGFPQREVYGENVVFSYSYNWTKIFLPIVKNALVKGKPKNNYADFNIDPTLNFYDISYGFDVPQDTKTKINDTISYLKSTPRAIHPTNCNDLMLKYAEKWNLTMSTTYDRTKCIAGSNFFFINEPFPGMTYFGYYNITNTQVKFSPSIQIGVSIVSGVLIAIVLLSMVGVYKYRASSSIRSASPIFLIFILFGALIVFGGIILWVSELNDHVCNGRLWMVTLGFSTLIGSLVVKNFRIWLIFDNPELKTVKITNYQLYPWVACCLVINIILMSILTSLGDLREVDATGIDSLGKYEFLKICKMNNSGASVLYTILAYFGALLLTGVFVSWKIRIVDIEEFNESRAIAHTLYAISFCLFVIVPLMISPLEKQSETIILSVAGLFITTAAVLIIFLPKFYRVYEYGEEGTNEMFKSKKSSNIATARAESHKSSNSGNHRTNRRGNLVSGDFTDDSESSVIEPNQEVADVTSGAVLADFTEESVSEIDENEKNHNDEIELPEINQSEQQNSEIEQPPPPPPPQQIEPDEKNQD.

Positions M1–G23 are cleaved as a signal peptide. Residues V24–Q391 lie on the Extracellular side of the membrane. N-linked (GlcNAc...) asparagine glycosylation is found at N73, N126, N262, N313, N343, and N378. Residues I392–V412 traverse the membrane as a helical segment. Topologically, residues Y413 to P426 are cytoplasmic. The chain crosses the membrane as a helical span at residues I427 to V447. The Extracellular portion of the chain corresponds to S448–T463. A helical membrane pass occupies residues L464 to F484. Residues D485 to Y500 are Cytoplasmic-facing. The chain crosses the membrane as a helical span at residues P501–G521. Residues D522–S551 are Extracellular-facing. Residue N546 is glycosylated (N-linked (GlcNAc...) asparagine). A helical membrane pass occupies residues V552–W572. Over K573–R586 the chain is Cytoplasmic. A helical membrane pass occupies residues A587–I607. Over S608–T616 the chain is Extracellular. Residues I617–P637 form a helical membrane-spanning segment. Over K638 to D772 the chain is Cytoplasmic. A disordered region spans residues T664 to D772. Acidic residues predominate over residues F718–E728. A compositionally biased stretch (low complexity) spans P740 to E753. The segment covering Q754–Q763 has biased composition (pro residues).

The protein in the N-terminal section; belongs to the BMP lipoprotein family. This sequence in the C-terminal section; belongs to the G-protein coupled receptor 3 family. GABA-B receptor subfamily.

It is found in the membrane. This Dictyostelium discoideum (Social amoeba) protein is Metabotropic glutamate receptor-like protein G (grlG).